The primary structure comprises 177 residues: MIDDDGYRPNVGIVICNRQGQVMWARRYGQHSWQFPQGGINPGESAEQAMYRELFEEVGLRKKDVRVLASTRNWLRYKLPKRLVRWDTKPVCIGQKQKWFLLQLMCNESDINMQSSGTPEFDGWRWVSYWYPVRQVVSFKRDVYRRVMKEFINPVILLQESVAARVATPSGPRRKRG.

A Nudix hydrolase domain is found at 6–149; it reads GYRPNVGIVI…KRDVYRRVMK (144 aa). The short motif at 38–59 is the Nudix box element; that stretch reads GGINPGESAEQAMYRELFEEVG.

The protein belongs to the Nudix hydrolase family. RppH subfamily. It depends on a divalent metal cation as a cofactor.

In terms of biological role, accelerates the degradation of transcripts by removing pyrophosphate from the 5'-end of triphosphorylated RNA, leading to a more labile monophosphorylated state that can stimulate subsequent ribonuclease cleavage. In Pectobacterium carotovorum subsp. carotovorum (strain PC1), this protein is RNA pyrophosphohydrolase.